A 68-amino-acid polypeptide reads, in one-letter code: uncharacterized protein (68 aa).

This is an uncharacterized protein from Escherichia coli (Bacteriophage T4).